Reading from the N-terminus, the 305-residue chain is Ribosomal RNA small subunit methyltransferase H (305 aa).

S-adenosyl-L-methionine contacts are provided by residues 47–49 (GGH), aspartate 66, phenylalanine 93, aspartate 108, and glutamine 115.

The protein belongs to the methyltransferase superfamily. RsmH family.

It is found in the cytoplasm. It catalyses the reaction cytidine(1402) in 16S rRNA + S-adenosyl-L-methionine = N(4)-methylcytidine(1402) in 16S rRNA + S-adenosyl-L-homocysteine + H(+). Functionally, specifically methylates the N4 position of cytidine in position 1402 (C1402) of 16S rRNA. This Prochlorococcus marinus (strain MIT 9211) protein is Ribosomal RNA small subunit methyltransferase H.